The primary structure comprises 232 residues: MSDDSSDSTSGAGSGRGRDSGLTERQRTILDVIRASVTSRGYPPSIREIGDAVGLTSTSSVAHQLRTLERKGYLRRDPNRPRAVDVRGSDDHAAPIVATDVAGSDSLPEPTFVPVLGRIAAGGPILAEEAVEDVFPLPRELVGEGSLFLLKVVGESMIDAAICDGDWVVVRQQSVADNGDIVAAMIDGEATVKTFKRTKGQVWLMPHNPAFDPIPGNDAAILGKVVTVIRKI.

The segment at M1–R25 is disordered. Basic and acidic residues predominate over residues R16–R25. The H-T-H motif DNA-binding region spans I46–R66. Active-site for autocatalytic cleavage activity residues include S156 and K193.

This sequence belongs to the peptidase S24 family. As to quaternary structure, homodimer.

It carries out the reaction Hydrolysis of Ala-|-Gly bond in repressor LexA.. In terms of biological role, represses a number of genes involved in the response to DNA damage (SOS response), including recA and lexA. In the presence of single-stranded DNA, RecA interacts with LexA causing an autocatalytic cleavage which disrupts the DNA-binding part of LexA, leading to derepression of the SOS regulon and eventually DNA repair. The polypeptide is LexA repressor (Mycolicibacterium vanbaalenii (strain DSM 7251 / JCM 13017 / BCRC 16820 / KCTC 9966 / NRRL B-24157 / PYR-1) (Mycobacterium vanbaalenii)).